The sequence spans 556 residues: 2-succinyl-5-enolpyruvyl-6-hydroxy-3-cyclohexene-1-carboxylate synthase (556 aa).

Belongs to the TPP enzyme family. MenD subfamily. In terms of assembly, homodimer. The cofactor is Mg(2+). Mn(2+) is required as a cofactor. It depends on thiamine diphosphate as a cofactor.

It catalyses the reaction isochorismate + 2-oxoglutarate + H(+) = 5-enolpyruvoyl-6-hydroxy-2-succinyl-cyclohex-3-ene-1-carboxylate + CO2. The protein operates within quinol/quinone metabolism; 1,4-dihydroxy-2-naphthoate biosynthesis; 1,4-dihydroxy-2-naphthoate from chorismate: step 2/7. Its pathway is quinol/quinone metabolism; menaquinone biosynthesis. Functionally, catalyzes the thiamine diphosphate-dependent decarboxylation of 2-oxoglutarate and the subsequent addition of the resulting succinic semialdehyde-thiamine pyrophosphate anion to isochorismate to yield 2-succinyl-5-enolpyruvyl-6-hydroxy-3-cyclohexene-1-carboxylate (SEPHCHC). The chain is 2-succinyl-5-enolpyruvyl-6-hydroxy-3-cyclohexene-1-carboxylate synthase from Escherichia coli O127:H6 (strain E2348/69 / EPEC).